We begin with the raw amino-acid sequence, 103 residues long: Matrix Gla protein (103 aa).

Residues 1–19 (MKSLILLAILAALAVVTLC) form the signal peptide. Residue Glu-21 is modified to 4-carboxyglutamate. 3 positions are modified to phosphoserine: Ser-22, Ser-25, and Ser-28. A Gla domain is found at 51-97 (RAKVQERIRERSKPVHELNREACDDYRLCERYAMVYGYNAAYNRYFR). 4-carboxyglutamate occurs at positions 56, 60, 67, and 71. Cys-73 and Cys-79 are disulfide-bonded. Residues 97 to 103 (RKRRGTK) constitute a propeptide, removed in mature form; probably by carboxypeptidase N.

This sequence belongs to the osteocalcin/matrix Gla protein family. Requires vitamin K-dependent gamma-carboxylation for its function.

It localises to the secreted. In terms of biological role, associates with the organic matrix of bone and cartilage. Thought to act as an inhibitor of bone formation. The sequence is that of Matrix Gla protein (MGP) from Homo sapiens (Human).